Here is a 350-residue protein sequence, read N- to C-terminus: Deoxyribonuclease-2-alpha (350 aa).

Positions 1-19 (MAAPSSLLLAALLWVPAEA) are cleaved as a signal peptide. An intrachain disulfide couples Cys22 to Cys162. N-linked (GlcNAc...) asparagine glycosylation is found at Asn89, Asn215, Asn269, and Asn293. 2 cysteine pairs are disulfide-bonded: Cys270–Cys350 and Cys311–Cys330. His298 is a catalytic residue.

The protein belongs to the DNase II family. As to expression, ubiquitous.

Its subcellular location is the lysosome. It catalyses the reaction Endonucleolytic cleavage to nucleoside 3'-phosphates and 3'-phosphooligonucleotide end-products.. Its function is as follows. Hydrolyzes DNA under acidic conditions with a preference for double-stranded DNA. Plays a major role in the clearance of nucleic acids generated through apoptosis, hence preventing autoinflammation. Necessary for proper fetal development and for definitive erythropoiesis in fetal liver and bone marrow, where it degrades nuclear DNA expelled from erythroid precursor cells. The sequence is that of Deoxyribonuclease-2-alpha (Dnase2) from Rattus norvegicus (Rat).